The sequence spans 272 residues: Phosphonates import ATP-binding protein PhnC 1 (272 aa).

The ABC transporter domain occupies 2-246; it reads LRIQALTKTY…VLTSIYGEED (245 aa). 35-42 is a binding site for ATP; sequence GPSGAGKS.

It belongs to the ABC transporter superfamily. Phosphonates importer (TC 3.A.1.9.1) family. The complex is composed of two ATP-binding proteins (PhnC), two transmembrane proteins (PhnE) and a solute-binding protein (PhnD).

The protein localises to the cell inner membrane. It catalyses the reaction phosphonate(out) + ATP + H2O = phosphonate(in) + ADP + phosphate + H(+). Its function is as follows. Part of the ABC transporter complex PhnCDE involved in phosphonates import. Responsible for energy coupling to the transport system. The protein is Phosphonates import ATP-binding protein PhnC 1 of Rhodopseudomonas palustris (strain BisB18).